The sequence spans 129 residues: Ribosome-binding factor A (129 aa).

The protein belongs to the RbfA family. As to quaternary structure, monomer. Binds 30S ribosomal subunits, but not 50S ribosomal subunits or 70S ribosomes.

The protein localises to the cytoplasm. In terms of biological role, one of several proteins that assist in the late maturation steps of the functional core of the 30S ribosomal subunit. Associates with free 30S ribosomal subunits (but not with 30S subunits that are part of 70S ribosomes or polysomes). Required for efficient processing of 16S rRNA. May interact with the 5'-terminal helix region of 16S rRNA. The protein is Ribosome-binding factor A of Thermomicrobium roseum (strain ATCC 27502 / DSM 5159 / P-2).